Here is a 273-residue protein sequence, read N- to C-terminus: Tryptase (273 aa).

The N-terminal stretch at 1-18 is a signal peptide; sequence MLKLLLLTLPLLSSLVHA. The propeptide at 19–28 is activation peptide; that stretch reads APSLAMPREG. In terms of domain architecture, Peptidase S1 spans 29–270; that stretch reads IVGGQEASGN…YLDWIYRYVP (242 aa). A glycan (N-linked (GlcNAc...) asparagine) is linked at Asn49. Residues Cys57 and Cys73 are joined by a disulfide bond. Residues His72 and Asp119 each act as charge relay system in the active site. 3 disulfide bridges follow: Cys153/Cys228, Cys186/Cys209, and Cys218/Cys246. The Charge relay system role is filled by Ser222.

Belongs to the peptidase S1 family. Tryptase subfamily. In terms of assembly, homotetramer. In terms of processing, glycosylated. In terms of tissue distribution, mast cells.

It is found in the secreted. It catalyses the reaction Preferential cleavage: Arg-|-Xaa, Lys-|-Xaa, but with more restricted specificity than trypsin.. In terms of biological role, tryptase is the major neutral protease present in mast cells and is secreted upon the coupled activation-degranulation response of this cell type. May play a role in innate immunity. This Rattus norvegicus (Rat) protein is Tryptase (Tpsab1).